The following is a 129-amino-acid chain: Serum amyloid A-2 protein (129 aa).

The signal sequence occupies residues 1 to 18; it reads MKLFTGLIFCSLVLGVHS. Residue glutamine 19 is modified to Pyrrolidone carboxylic acid. A compositionally biased stretch (basic and acidic residues) spans 90-103; that stretch reads KHGDSGHGVEDSRA. A disordered region spans residues 90–129; the sequence is KHGDSGHGVEDSRADQAANEWGRSGKDPNHFRPPGLPDKY.

It belongs to the SAA family. As to quaternary structure, apolipoprotein of the HDL complex.

It is found in the secreted. Functionally, major acute phase reactant. This Sus scrofa (Pig) protein is Serum amyloid A-2 protein.